A 456-amino-acid chain; its full sequence is Gamma-glutamyl phosphate reductase (456 aa).

Ser-2 is modified (N-acetylserine).

Belongs to the gamma-glutamyl phosphate reductase family.

The catalysed reaction is L-glutamate 5-semialdehyde + phosphate + NADP(+) = L-glutamyl 5-phosphate + NADPH + H(+). It participates in amino-acid biosynthesis; L-proline biosynthesis; L-glutamate 5-semialdehyde from L-glutamate: step 2/2. Functionally, catalyzes the NADPH dependent reduction of L-gamma-glutamyl 5-phosphate into L-glutamate 5-semialdehyde and phosphate. The product spontaneously undergoes cyclization to form 1-pyrroline-5-carboxylate. The polypeptide is Gamma-glutamyl phosphate reductase (PRO2) (Saccharomyces cerevisiae (strain ATCC 204508 / S288c) (Baker's yeast)).